A 538-amino-acid chain; its full sequence is Syncytin-1 (538 aa).

Residues 1-20 (MALPYHIFLFTVLLPSFTLT) form the signal peptide. Topologically, residues 21–443 (APPPCRCMTS…NTGPWGLLSQ (423 aa)) are extracellular. Residue Asn-169 is glycosylated (N-linked (GlcNAc...) asparagine). The CXXC signature appears at 186–189 (CWIC). 3 cysteine pairs are disulfide-bonded: Cys-186/Cys-189, Cys-186/Cys-405, and Cys-397/Cys-404. N-linked (GlcNAc...) asparagine glycosylation is found at Asn-208, Asn-214, Asn-234, Asn-242, and Asn-281. A fusion peptide region spans residues 320–340 (ILPFVIGAGVLGALGTGIGGI). Residues 380-396 (LQNRRALDLLTAERGGT) form an immunosuppression region. Positions 397–406 (CLFLGEECCY) match the CX6CC motif. Residue Asn-409 is glycosylated (N-linked (GlcNAc...) asparagine). Residues 444 to 464 (WMPWILPFLGPLAAIILLLLF) form a helical membrane-spanning segment. Positions 465–484 (GPCIFNLLVNFVSSRIEAVK) are essential for the fusiogenic function. Residues 465 to 538 (GPCIFNLLVN…LLRPNSAGSS (74 aa)) lie on the Cytoplasmic side of the membrane. Positions 496–538 (KIYRRPLDRPASPRSDVNDIKGTPPEEISAAQPLLRPNSAGSS) are disordered.

The protein belongs to the gamma type-C retroviral envelope protein family. HERV class-I W env subfamily. As to quaternary structure, the mature envelope protein (Env) consists of a trimer of SU-TM heterodimers attached probably by a labile interchain disulfide bond. Interacts with the C-type lectin CD209/DC-SIGN. In terms of processing, specific enzymatic cleavages in vivo yield mature proteins. Envelope glycoproteins are synthesized as an inactive precursor that is heavily N-glycosylated and processed likely by furin in the Golgi to yield the mature SU and TM proteins. The cleavage site between SU and TM requires the minimal sequence [KR]-X-[KR]-R. The intracytoplasmic tail cleavage by the viral protease that is required for the fusiogenic activity of some retroviruses envelope proteins seems to have been lost during evolution. Post-translationally, the CXXC motif is highly conserved across a broad range of retroviral envelope proteins. It is thought to participate in the formation of a labile disulfide bond possibly with the CX6CC motif present in the transmembrane protein. Isomerization of the intersubunit disulfide bond to an SU intrachain disulfide bond is thought to occur upon receptor recognition in order to allow membrane fusion. In terms of tissue distribution, expressed at higher level in placental syncytiotrophoblast. Expressed at intermediate level in testis. Seems also to be found at low level in adrenal tissue, bone marrow, breast, colon, kidney, ovary, prostate, skin, spleen, thymus, thyroid, brain and trachea. Both mRNA and protein levels are significantly increased in the brain of individuals with multiple sclerosis, particularly in astrocytes and microglia.

It localises to the cell membrane. The protein localises to the virion. Its function is as follows. This endogenous retroviral envelope protein has retained its original fusogenic properties and participates in trophoblast fusion and the formation of a syncytium during placenta morphogenesis. May induce fusion through binding of SLC1A4 and SLC1A5. Functionally, endogenous envelope proteins may have kept, lost or modified their original function during evolution. Retroviral envelope proteins mediate receptor recognition and membrane fusion during early infection. The surface protein (SU) mediates receptor recognition, while the transmembrane protein (TM) acts as a class I viral fusion protein. The protein may have at least 3 conformational states: pre-fusion native state, pre-hairpin intermediate state, and post-fusion hairpin state. During viral and target cell membrane fusion, the coiled coil regions (heptad repeats) assume a trimer-of-hairpins structure, positioning the fusion peptide in close proximity to the C-terminal region of the ectodomain. The formation of this structure appears to drive apposition and subsequent fusion of membranes. This chain is Syncytin-1 (ERVW-1), found in Homo sapiens (Human).